The chain runs to 383 residues: uncharacterized protein (383 aa).

The first 23 residues, 1 to 23, serve as a signal peptide directing secretion; it reads MKLTSIPIASTLLSLLAASGTLA.

It belongs to the but2 family.

The protein resides in the cytoplasm. The protein localises to the nucleus. This is an uncharacterized protein from Schizosaccharomyces pombe (strain 972 / ATCC 24843) (Fission yeast).